Reading from the N-terminus, the 417-residue chain is Tyrosine--tRNA ligase (417 aa).

Y39 serves as a coordination point for L-tyrosine. Positions P44–S53 match the 'HIGH' region motif. Residues Y176 and Q180 each coordinate L-tyrosine. The 'KMSKS' region signature appears at K236–S240. Residue K239 participates in ATP binding. An S4 RNA-binding domain is found at T350–L417.

The protein belongs to the class-I aminoacyl-tRNA synthetase family. TyrS type 1 subfamily. Homodimer.

It localises to the cytoplasm. It catalyses the reaction tRNA(Tyr) + L-tyrosine + ATP = L-tyrosyl-tRNA(Tyr) + AMP + diphosphate + H(+). In terms of biological role, catalyzes the attachment of tyrosine to tRNA(Tyr) in a two-step reaction: tyrosine is first activated by ATP to form Tyr-AMP and then transferred to the acceptor end of tRNA(Tyr). The polypeptide is Tyrosine--tRNA ligase (Bartonella henselae (strain ATCC 49882 / DSM 28221 / CCUG 30454 / Houston 1) (Rochalimaea henselae)).